We begin with the raw amino-acid sequence, 137 residues long: Lysozyme (137 aa).

The first 20 residues, 1-20, serve as a signal peptide directing secretion; that stretch reads MQRLLGSIVILATVFTFCEA. Positions 21–135 constitute an I-type lysozyme domain; sequence TISSACLRCI…EKVHQQGCNV (115 aa). Intrachain disulfides connect Cys26–Cys102, Cys31–Cys37, Cys42–Cys51, Cys64–Cys84, Cys74–Cys80, and Cys98–Cys116. Glu34 acts as the Proton donor in catalysis. Asp45 serves as the catalytic Nucleophile. 57–63 serves as a coordination point for substrate; the sequence is KENYWED. Substrate contacts are provided by residues Tyr88 and 109-111; that span reads HNG.

This sequence belongs to the glycosyl hydrolase 22 family. Type-I lysozyme subfamily. As to expression, expressed in the basophil cells of the oyster digestive gland.

The protein resides in the secreted. The catalysed reaction is Hydrolysis of (1-&gt;4)-beta-linkages between N-acetylmuramic acid and N-acetyl-D-glucosamine residues in a peptidoglycan and between N-acetyl-D-glucosamine residues in chitodextrins.. Functionally, has bacteriolytic activity. May play a role in digestion and in the host defense mechanisms against invading microbes. The sequence is that of Lysozyme (lysoz) from Magallana gigas (Pacific oyster).